A 1978-amino-acid polypeptide reads, in one-letter code: Sodium channel protein type 8 subunit alpha (1978 aa).

Disordered stretches follow at residues 1 to 20 (MAAR…FTPE) and 28 to 62 (RIAE…LEAG). The Cytoplasmic portion of the chain corresponds to 1-132 (MAARLLAPPG…RIAIKILIHS (132 aa)). Residues 28 to 61 (RIAESKLKKPPKADGSHREDDEDSKPKPNSDLEA) are compositionally biased toward basic and acidic residues. The stretch at 114-442 (ILSPFNLIRR…KAMLEQLKKQ (329 aa)) is one I repeat. The chain crosses the membrane as a helical span at residues 133–151 (VFSMIIMCTILTNCVFMTF). The Extracellular segment spans residues 152–158 (SNPPEWS). A helical transmembrane segment spans residues 159–179 (KNVEYTFTGIYTFESLVKIIA). Residues 180–193 (RGFCIDGFTFLRDP) lie on the Cytoplasmic side of the membrane. The chain crosses the membrane as a helical span at residues 194–211 (WNWLDFSVIMMAYVTEFV). The Extracellular portion of the chain corresponds to 212-217 (DLGNVS). N-linked (GlcNAc...) asparagine glycosylation is present at N215. The helical transmembrane segment at 218-234 (ALRTFRVLRALKTISVI) threads the bilayer. Residues 235–253 (PGLKTIVGALIQSVKKLSD) lie on the Cytoplasmic side of the membrane. Residues 254-273 (VMILTVFCLSVFALIGLQLF) form a helical membrane-spanning segment. Residues 274-355 (MGNLRNKCVV…PNYGYTSFDT (82 aa)) lie on the Extracellular side of the membrane. A disulfide bridge links C281 with C333. N-linked (GlcNAc...) asparagine glycosylation is found at N289, N295, N308, and N326. An intramembrane region (pore-forming) is located at residues 356–380 (FSWAFLALFRLMTQDYWENLYQLTL). E373 is a binding site for Na(+). The Extracellular portion of the chain corresponds to 381-387 (RAAGKTY). A helical transmembrane segment spans residues 388 to 408 (MIFFVLVIFVGSFYLVNLILA). The Cytoplasmic segment spans residues 409-751 (VVAMAYEEQN…EIVNLIVMDP (343 aa)). 2 disordered regions span residues 446 to 530 (AQAA…KAFR) and 576 to 597 (DPGS…SEGR). Over residues 473-486 (SPRSSSELSKLSSK) the composition is skewed to low complexity. Basic residues predominate over residues 489–500 (KERRNRRKKRKQ). Basic and acidic residues-rich tracts occupy residues 501 to 530 (KELS…KAFR) and 586 to 597 (DEHSTVEESEGR). 2 positions are modified to phosphoserine: S518 and S520. The II repeat unit spans residues 733–1005 (CHPYWIKLKE…QISVIRIKKG (273 aa)). The chain crosses the membrane as a helical span at residues 752–770 (FVDLAITICIVLNTLFMAM). Residues 771–781 (EHHPMTPQFEH) lie on the Extracellular side of the membrane. A helical membrane pass occupies residues 782 to 801 (VLAVGNLVFTGIFTAEMFLK). At 802-815 (LIAMDPYYYFQEGW) the chain is on the cytoplasmic side. Residues 816-835 (NIFDGFIVSLSLMELSLADV) traverse the membrane as a helical segment. Topologically, residues 836–837 (EG) are extracellular. Residues 838-855 (LSVLRSFRLLRVFKLAKS) traverse the membrane as a helical segment. Residues 856–871 (WPTLNMLIKIIGNSVG) are Cytoplasmic-facing. Residues 872–890 (ALGNLTLVLAIIVFIFAVV) form a helical membrane-spanning segment. Topologically, residues 891-919 (GMQLFGKSYKECVCKINQECKLPRWHMND) are extracellular. A disulfide bond links C904 and C910. The segment at residues 920 to 940 (FFHSFLIVFRVLCGEWIETMW) is an intramembrane region (pore-forming). Residues E934 and E937 each coordinate Na(+). Over 941–953 (DCMEVAGQAMCLI) the chain is Extracellular. C942 and C951 are joined by a disulfide. The chain crosses the membrane as a helical span at residues 954-974 (VFMMVMVIGNLVVLNLFLALL). Residues 975 to 1197 (LSSFSADNLA…TCFLIVEHNW (223 aa)) lie on the Cytoplasmic side of the membrane. Residues 1105-1146 (NLNTEDVSSESDPEGSKDKLDDTSSSEGSTIDIKPEVEEVPV) are disordered. The III repeat unit spans residues 1178–1493 (LGKSWWILRK…KKYYNAMKKL (316 aa)). The helical transmembrane segment at 1198–1215 (FETFIIFMILLSSGALAF) threads the bilayer. At 1216-1228 (EDIYIEQRKTIRT) the chain is on the extracellular side. The chain crosses the membrane as a helical span at residues 1229–1247 (ILEYADKVFTYIFILEMLL). Over 1248–1261 (KWTAYGFVKFFTNA) the chain is Cytoplasmic. The chain crosses the membrane as a helical span at residues 1262 to 1280 (WCWLDFLIVAVSLVSLIAN). At 1281–1288 (ALGYSELG) the chain is on the extracellular side. A helical transmembrane segment spans residues 1289 to 1307 (AIKSLRTLRALRPLRALSR). The Cytoplasmic portion of the chain corresponds to 1308-1324 (FEGMRVVVNALVGAIPS). Residues 1325 to 1344 (IMNVLLVCLIFWLIFSIMGV) form a helical membrane-spanning segment. The Extracellular segment spans residues 1345-1397 (NLFAGKYHYCFNETSEIRFEIDIVNNKTDCEKLMEGNSTEIRWKNVKINFDNV). Residues C1354 and C1374 are joined by a disulfide bond. N-linked (GlcNAc...) asparagine glycosylation is found at N1356, N1370, and N1381. An intramembrane region (pore-forming) is located at residues 1398–1419 (GAGYLALLQVATFKGWMDIMYA). Residues 1420-1436 (AVDSRKPDEQPDYEGNI) lie on the Extracellular side of the membrane. Residues 1437–1458 (YMYIYFVIFIIFGSFFTLNLFI) form a helical membrane-spanning segment. Over 1459–1521 (GVIIDNFNQQ…IVFDFVTQQA (63 aa)) the chain is Cytoplasmic. Position 1495 is a phosphoserine; by PKC (S1495). An IV repeat occupies 1502-1799 (IPRPLNKIQG…WEKFDPDATQ (298 aa)). A helical transmembrane segment spans residues 1522–1539 (FDIVIMMLICLNMVTMMV). Residues 1540–1550 (ETDTQSKQMEN) are Extracellular-facing. The helical transmembrane segment at 1551-1569 (ILYWINLVFVIFFTCECVL) threads the bilayer. Over 1570–1581 (KMFALRHYYFTI) the chain is Cytoplasmic. Residues 1582–1599 (GWNIFDFVVVILSIVGMF) form a helical membrane-spanning segment. The Extracellular segment spans residues 1600–1612 (LADIIEKYFVSPT). The chain crosses the membrane as a helical span at residues 1613–1629 (LFRVIRLARIGRILRLI). Over 1630-1648 (KGAKGIRTLLFALMMSLPA) the chain is Cytoplasmic. Residues 1649–1666 (LFNIGLLLFLVMFIFSIF) form a helical membrane-spanning segment. Topologically, residues 1667–1688 (GMSNFAYVKHEAGIDDMFNFET) are extracellular. The pore-forming intramembrane region spans 1689-1711 (FGNSMICLFQITTSAGWDGLLLP). Topologically, residues 1712-1740 (ILNRPPDCSLDKEHPGSGFKGDCGNPSVG) are extracellular. C1719 and C1734 are joined by a disulfide. A helical membrane pass occupies residues 1741–1763 (IFFFVSYIIISFLIVVNMYIAII). The Cytoplasmic segment spans residues 1764-1978 (LENFSVATEE…RQKEVRESKC (215 aa)). The IQ domain occupies 1893–1922 (EEVSAVVLQRAYRGHLARRGFICRKMASNK). The tract at residues 1923–1978 (LENGGTHRDKKESTPSTASLPSYDSVTKPDKEKQQRAEEGRRERAKRQKEVRESKC) is disordered. Residues 1936–1947 (TPSTASLPSYDS) are compositionally biased toward polar residues. Over residues 1949 to 1978 (TKPDKEKQQRAEEGRRERAKRQKEVRESKC) the composition is skewed to basic and acidic residues.

This sequence belongs to the sodium channel (TC 1.A.1.10) family. Nav1.6/SCN8A subfamily. In terms of assembly, the voltage-sensitive sodium channel consists of an ion-conducting pore-forming alpha subunit regulated by one or more beta-1 (SCN1B), beta-2 (SCN2B), beta-3 (SCN3B) and/or beta-4 (SCN4B) subunits. Beta-1 (SCN1B) and beta-3 (SCN3B) are non-covalently associated with alpha, while beta-2 (SCN2B) and beta-4 (SCN4B) are covalently linked by disulfide bonds. Interacts with NEDD4 and NEDD4L. Interacts with FGF13. Interacts with FGF14, GBG3, GBB2 and SCN1B. Interacts with TMEM233. Interacts with the conotoxin GVIIJ. Interacts with CALM1; the interaction modulates the inactivation rate of SCN8A. May be ubiquitinated by NEDD4L; which would promote its endocytosis. Post-translationally, phosphorylation at Ser-1495 by PKC in a highly conserved cytoplasmic loop slows inactivation of the sodium channel and reduces peak sodium currents. In terms of tissue distribution, isoform 1 is highly expressed in brain, moderately in spinal cord, and at low levels in dorsal root ganglia, nodose ganglia and superior cervical ganglia. Not detected in sciatic nerve and non-neuronal tissues. Isoform 2 is hardly detectable, if at all, in brain, expressed at low levels in spinal cord and at highest levels in dorsal root ganglia.

It localises to the cell membrane. Its subcellular location is the cell projection. The protein resides in the axon. It catalyses the reaction Na(+)(in) = Na(+)(out). Functionally, pore-forming subunit of a voltage-gated sodium channel complex assuming opened or closed conformations in response to the voltage difference across membranes and through which sodium ions selectively pass along their electrochemical gradient. Contributes to neuronal excitability by regulating action potential threshold and propagation. The chain is Sodium channel protein type 8 subunit alpha from Rattus norvegicus (Rat).